We begin with the raw amino-acid sequence, 526 residues long: Major facilitator superfamily domain-containing protein 4A (526 aa).

12 helical membrane-spanning segments follow: residues leucine 21 to isoleucine 41, isoleucine 55 to phenylalanine 75, leucine 84 to cysteine 104, leucine 107 to isoleucine 127, valine 142 to alanine 162, tyrosine 215 to valine 235, leucine 297 to valine 317, glycine 341 to leucine 361, glycine 377 to isoleucine 397, cysteine 401 to leucine 421, valine 430 to methionine 450, and phenylalanine 458 to phenylalanine 478.

It belongs to the major facilitator superfamily.

Its subcellular location is the membrane. The sequence is that of Major facilitator superfamily domain-containing protein 4A (mfsd4a) from Danio rerio (Zebrafish).